The primary structure comprises 123 residues: Ribonuclease P protein component (123 aa).

It belongs to the RnpA family. As to quaternary structure, consists of a catalytic RNA component (M1 or rnpB) and a protein subunit.

It carries out the reaction Endonucleolytic cleavage of RNA, removing 5'-extranucleotides from tRNA precursor.. In terms of biological role, RNaseP catalyzes the removal of the 5'-leader sequence from pre-tRNA to produce the mature 5'-terminus. It can also cleave other RNA substrates such as 4.5S RNA. The protein component plays an auxiliary but essential role in vivo by binding to the 5'-leader sequence and broadening the substrate specificity of the ribozyme. The protein is Ribonuclease P protein component of Streptococcus pneumoniae (strain JJA).